We begin with the raw amino-acid sequence, 848 residues long: DNA-binding protein RFX6 (848 aa).

Positions 56–131 (TLQWLEDNYI…YHYYGIGIKE (76 aa)) form a DNA-binding region, RFX-type winged-helix.

Belongs to the RFX family. Expressed in progenitors and hormone expressing cells of the islet lineage.

It is found in the nucleus. Transcription factor required to direct islet cell differentiation during endocrine pancreas development. This chain is DNA-binding protein RFX6 (rfx6), found in Danio rerio (Zebrafish).